The sequence spans 143 residues: Nucleoside diphosphate kinase (143 aa).

K11, F59, R87, T93, R104, and N114 together coordinate ATP. The active-site Pros-phosphohistidine intermediate is H117.

This sequence belongs to the NDK family. As to quaternary structure, homotetramer. It depends on Mg(2+) as a cofactor.

The protein resides in the cytoplasm. It catalyses the reaction a 2'-deoxyribonucleoside 5'-diphosphate + ATP = a 2'-deoxyribonucleoside 5'-triphosphate + ADP. The catalysed reaction is a ribonucleoside 5'-diphosphate + ATP = a ribonucleoside 5'-triphosphate + ADP. Major role in the synthesis of nucleoside triphosphates other than ATP. The ATP gamma phosphate is transferred to the NDP beta phosphate via a ping-pong mechanism, using a phosphorylated active-site intermediate. The polypeptide is Nucleoside diphosphate kinase (Tolumonas auensis (strain DSM 9187 / NBRC 110442 / TA 4)).